The sequence spans 334 residues: Fructose-1,6-bisphosphatase class 1 (334 aa).

Residues Glu-91, Asp-113, Leu-115, and Asp-116 each coordinate Mg(2+). Substrate is bound by residues 116–119 (DGSS), Asn-208, and Lys-274. A Mg(2+)-binding site is contributed by Glu-280.

This sequence belongs to the FBPase class 1 family. In terms of assembly, homotetramer. Requires Mg(2+) as cofactor.

It is found in the cytoplasm. The enzyme catalyses beta-D-fructose 1,6-bisphosphate + H2O = beta-D-fructose 6-phosphate + phosphate. It functions in the pathway carbohydrate biosynthesis; gluconeogenesis. This is Fructose-1,6-bisphosphatase class 1 from Herminiimonas arsenicoxydans.